The chain runs to 510 residues: NKAP family protein (510 aa).

A compositionally biased stretch (basic and acidic residues) spans M1–R22. 3 disordered regions span residues M1–Q128, E149–G220, and V239–E401. Over residues Y23–S39 the composition is skewed to basic residues. A compositionally biased stretch (basic and acidic residues) spans R40–K89. Over residues S96–G105 the composition is skewed to gly residues. 2 stretches are compositionally biased toward low complexity: residues S112–S123 and N184–N219. Over residues N262–S273 the composition is skewed to basic residues. A compositionally biased stretch (low complexity) spans S274–D283. The segment covering R292–S322 has biased composition (basic residues). Basic and acidic residues predominate over residues D342–R351. Basic residues predominate over residues S352–H367. The span at H368–E383 shows a compositional bias: basic and acidic residues.

This sequence belongs to the NKAP family.

The polypeptide is NKAP family protein (Dictyostelium discoideum (Social amoeba)).